Here is a 64-residue protein sequence, read N- to C-terminus: MKLTCMLVVLLLVLPFGDLIANTGGLCGMPPGVCYPNGCACGQDTPCCHPSGCNRYNYCGPLLE.

Residues 1 to 21 (MKLTCMLVVLLLVLPFGDLIA) form the signal peptide.

Belongs to the conotoxin O1 superfamily. In terms of processing, contains 4 disulfide bonds. As to expression, expressed by the venom duct.

Its subcellular location is the secreted. Functionally, probable neurotoxin. In Californiconus californicus (California cone), this protein is Conotoxin Cal12.4.